We begin with the raw amino-acid sequence, 301 residues long: Pyridoxal 5'-phosphate synthase subunit PdxS (301 aa).

Position 31 (Asp31) interacts with D-ribose 5-phosphate. Lys88 serves as the catalytic Schiff-base intermediate with D-ribose 5-phosphate. Gly160 contacts D-ribose 5-phosphate. Position 172 (Lys172) interacts with D-glyceraldehyde 3-phosphate. D-ribose 5-phosphate-binding positions include Gly221 and 242-243 (GS).

The protein belongs to the PdxS/SNZ family. In terms of assembly, in the presence of PdxT, forms a dodecamer of heterodimers.

The enzyme catalyses aldehydo-D-ribose 5-phosphate + D-glyceraldehyde 3-phosphate + L-glutamine = pyridoxal 5'-phosphate + L-glutamate + phosphate + 3 H2O + H(+). It functions in the pathway cofactor biosynthesis; pyridoxal 5'-phosphate biosynthesis. Its function is as follows. Catalyzes the formation of pyridoxal 5'-phosphate from ribose 5-phosphate (RBP), glyceraldehyde 3-phosphate (G3P) and ammonia. The ammonia is provided by the PdxT subunit. Can also use ribulose 5-phosphate and dihydroxyacetone phosphate as substrates, resulting from enzyme-catalyzed isomerization of RBP and G3P, respectively. The sequence is that of Pyridoxal 5'-phosphate synthase subunit PdxS from Methanosarcina mazei (strain ATCC BAA-159 / DSM 3647 / Goe1 / Go1 / JCM 11833 / OCM 88) (Methanosarcina frisia).